The sequence spans 188 residues: UPF0301 protein XAC2918 (188 aa).

This sequence belongs to the UPF0301 (AlgH) family.

This Xanthomonas axonopodis pv. citri (strain 306) protein is UPF0301 protein XAC2918.